Here is a 384-residue protein sequence, read N- to C-terminus: uncharacterized protein (384 aa).

Basic residues predominate over residues 327-339 (KKEKKEKKEKKPK). A disordered region spans residues 327-358 (KKEKKEKKEKKPKKAVEEEPKQYLTPEFVNDD).

This is an uncharacterized protein from Magallana gigas (Pacific oyster).